The chain runs to 579 residues: Adenine deaminase (579 aa).

It belongs to the metallo-dependent hydrolases superfamily. Adenine deaminase family. Requires Mn(2+) as cofactor.

The enzyme catalyses adenine + H2O + H(+) = hypoxanthine + NH4(+). This chain is Adenine deaminase, found in Listeria welshimeri serovar 6b (strain ATCC 35897 / DSM 20650 / CCUG 15529 / CIP 8149 / NCTC 11857 / SLCC 5334 / V8).